Here is a 431-residue protein sequence, read N- to C-terminus: Glutamate-1-semialdehyde 2,1-aminomutase (431 aa).

An N6-(pyridoxal phosphate)lysine modification is found at Lys-269.

It belongs to the class-III pyridoxal-phosphate-dependent aminotransferase family. HemL subfamily. As to quaternary structure, homodimer. The cofactor is pyridoxal 5'-phosphate.

The protein localises to the cytoplasm. It carries out the reaction (S)-4-amino-5-oxopentanoate = 5-aminolevulinate. It functions in the pathway porphyrin-containing compound metabolism; protoporphyrin-IX biosynthesis; 5-aminolevulinate from L-glutamyl-tRNA(Glu): step 2/2. In Francisella tularensis subsp. holarctica (strain FTNF002-00 / FTA), this protein is Glutamate-1-semialdehyde 2,1-aminomutase.